Here is a 189-residue protein sequence, read N- to C-terminus: Protein CotJC (189 aa).

This sequence belongs to the manganese catalase family.

Functionally, the cotJ operon proteins affect spore coat composition. They are either required for the normal formation of the inner layers of the coat or are themselves structural components of the coat. The chain is Protein CotJC (cotJC) from Bacillus subtilis (strain 168).